The following is a 113-amino-acid chain: Mitochondrial import inner membrane translocase subunit PAM16 like 1 (113 aa).

The N-terminal 48 residues, Met-1 to Gly-48, are a transit peptide targeting the mitochondrion. Residues Glu-55–Ala-104 are J-like.

Belongs to the TIM16/PAM16 family. In terms of tissue distribution, expressed at low levels in seedlings, rosettes and inflorescence.

Its subcellular location is the mitochondrion inner membrane. Its function is as follows. Regulates ATP-dependent protein translocation into the mitochondrial matrix. This is Mitochondrial import inner membrane translocase subunit PAM16 like 1 from Arabidopsis thaliana (Mouse-ear cress).